A 316-amino-acid polypeptide reads, in one-letter code: Ornithine carbamoyltransferase (316 aa).

Carbamoyl phosphate is bound by residues 57–60, Gln-84, Arg-108, and 135–138; these read STRT and HPCQ. L-ornithine-binding positions include Asn-166, Asp-230, and 234 to 235; that span reads SM. Carbamoyl phosphate contacts are provided by residues 269 to 270 and Arg-297; that span reads CL.

Belongs to the aspartate/ornithine carbamoyltransferase superfamily. OTCase family.

It localises to the cytoplasm. It catalyses the reaction carbamoyl phosphate + L-ornithine = L-citrulline + phosphate + H(+). Its pathway is amino-acid biosynthesis; L-arginine biosynthesis; L-arginine from L-ornithine and carbamoyl phosphate: step 1/3. Reversibly catalyzes the transfer of the carbamoyl group from carbamoyl phosphate (CP) to the N(epsilon) atom of ornithine (ORN) to produce L-citrulline. The chain is Ornithine carbamoyltransferase (argF) from Bacillus cereus (strain ATCC 14579 / DSM 31 / CCUG 7414 / JCM 2152 / NBRC 15305 / NCIMB 9373 / NCTC 2599 / NRRL B-3711).